We begin with the raw amino-acid sequence, 135 residues long: Small ribosomal subunit protein uS12 (135 aa).

The residue at position 89 (Asp89) is a 3-methylthioaspartic acid. A disordered region spans residues 106–135 (GVKDRKQGRSKYGAKRPKPGQAPAAAGKKK). Basic residues predominate over residues 113–123 (GRSKYGAKRPK). The span at 124–135 (PGQAPAAAGKKK) shows a compositional bias: low complexity.

This sequence belongs to the universal ribosomal protein uS12 family. Part of the 30S ribosomal subunit. Contacts proteins S8 and S17. May interact with IF1 in the 30S initiation complex.

Its function is as follows. With S4 and S5 plays an important role in translational accuracy. In terms of biological role, interacts with and stabilizes bases of the 16S rRNA that are involved in tRNA selection in the A site and with the mRNA backbone. Located at the interface of the 30S and 50S subunits, it traverses the body of the 30S subunit contacting proteins on the other side and probably holding the rRNA structure together. The combined cluster of proteins S8, S12 and S17 appears to hold together the shoulder and platform of the 30S subunit. This Synechococcus sp. (strain JA-3-3Ab) (Cyanobacteria bacterium Yellowstone A-Prime) protein is Small ribosomal subunit protein uS12.